The following is a 62-amino-acid chain: Photosystem II reaction center protein Z (62 aa).

The next 2 membrane-spanning stretches (helical) occupy residues 8 to 28 and 41 to 61; these read ALAA…VAYA and FLGS…NFLV.

The protein belongs to the PsbZ family. In terms of assembly, PSII is composed of 1 copy each of membrane proteins PsbA, PsbB, PsbC, PsbD, PsbE, PsbF, PsbH, PsbI, PsbJ, PsbK, PsbL, PsbM, PsbT, PsbX, PsbY, PsbZ, Psb30/Ycf12, peripheral proteins PsbO, CyanoQ (PsbQ), PsbU, PsbV and a large number of cofactors. It forms dimeric complexes.

The protein resides in the cellular thylakoid membrane. Functionally, may control the interaction of photosystem II (PSII) cores with the light-harvesting antenna, regulates electron flow through the 2 photosystem reaction centers. PSII is a light-driven water plastoquinone oxidoreductase, using light energy to abstract electrons from H(2)O, generating a proton gradient subsequently used for ATP formation. In Cyanothece sp. (strain PCC 7425 / ATCC 29141), this protein is Photosystem II reaction center protein Z.